Reading from the N-terminus, the 257-residue chain is Diphthine synthase (257 aa).

S-adenosyl-L-methionine-binding positions include Leu9, Asp83, Met86, 111–112, and Ile163; that span reads SI.

The protein belongs to the diphthine synthase family. Homodimer.

It catalyses the reaction 2-[(3S)-amino-3-carboxypropyl]-L-histidyl-[translation elongation factor 2] + 3 S-adenosyl-L-methionine = diphthine-[translation elongation factor 2] + 3 S-adenosyl-L-homocysteine + 3 H(+). The protein operates within protein modification; peptidyl-diphthamide biosynthesis. S-adenosyl-L-methionine-dependent methyltransferase that catalyzes the trimethylation of the amino group of the modified target histidine residue in translation elongation factor 2 (EF-2), to form an intermediate called diphthine. The three successive methylation reactions represent the second step of diphthamide biosynthesis. In Thermoplasma acidophilum (strain ATCC 25905 / DSM 1728 / JCM 9062 / NBRC 15155 / AMRC-C165), this protein is Diphthine synthase.